Here is a 183-residue protein sequence, read N- to C-terminus: ATP-dependent protease subunit HslV (183 aa).

The active site involves T12. 3 residues coordinate Na(+): A166, C169, and T172.

This sequence belongs to the peptidase T1B family. HslV subfamily. A double ring-shaped homohexamer of HslV is capped on each side by a ring-shaped HslU homohexamer. The assembly of the HslU/HslV complex is dependent on binding of ATP.

It localises to the cytoplasm. It carries out the reaction ATP-dependent cleavage of peptide bonds with broad specificity.. Allosterically activated by HslU binding. Functionally, protease subunit of a proteasome-like degradation complex believed to be a general protein degrading machinery. This chain is ATP-dependent protease subunit HslV, found in Afipia carboxidovorans (strain ATCC 49405 / DSM 1227 / KCTC 32145 / OM5) (Oligotropha carboxidovorans).